The following is a 207-amino-acid chain: uncharacterized protein (207 aa).

A signal peptide spans 1-19 (MRFNVSFLLSLLLPTLAFA).

The protein to P.multocida PM1509.

This is an uncharacterized protein from Pasteurella multocida (strain Pm70).